Reading from the N-terminus, the 257-residue chain is MEVFAVEGVPEVRPGDDVAELLVEQADLQDDDVVCVASTIVSKANGRGRSLSSYEPSGRAERIAATIEDIADEEKDPRMAQAILDECEEVLVEAPFILGVTKFGHITVNAGIDRSNVPGADLLLLPEDPTAEAEAIRDGIREHAGVEPSVIVTDTSGRPFRLGQRGVALGWAGLSASRDWRGEHDRDGRELEATVQAVVDELAAAANLVTGEGDGGTPAAVVRDFDFGDHAGSEQLFRDPEKDVVRQALREWSHVRD.

Residues 9–12 (VPEV), 38–39 (ST), and K43 contribute to the GTP site. D113 serves as a coordination point for a divalent metal cation. GTP is bound at residue N116. A divalent metal cation is bound by residues D154, T155, and E212. 210–217 (TGEGDGGT) serves as a coordination point for GTP.

The protein belongs to the CofE family. Homodimer. The cofactor is Mg(2+). Mn(2+) serves as cofactor. It depends on K(+) as a cofactor.

The enzyme catalyses oxidized coenzyme F420-0 + GTP + L-glutamate = oxidized coenzyme F420-1 + GDP + phosphate + H(+). The catalysed reaction is oxidized coenzyme F420-1 + GTP + L-glutamate = oxidized coenzyme F420-2 + GDP + phosphate + H(+). It functions in the pathway cofactor biosynthesis; coenzyme F420 biosynthesis. Its function is as follows. Catalyzes the GTP-dependent successive addition of two or more gamma-linked L-glutamates to the L-lactyl phosphodiester of 7,8-didemethyl-8-hydroxy-5-deazariboflavin (F420-0) to form coenzyme F420-0-glutamyl-glutamate (F420-2) or polyglutamated F420 derivatives. The chain is Coenzyme F420:L-glutamate ligase from Haloarcula marismortui (strain ATCC 43049 / DSM 3752 / JCM 8966 / VKM B-1809) (Halobacterium marismortui).